The primary structure comprises 84 residues: MSINENTMEFDIQKNKDDLTRSILSEVNNSLKEKGYNPINQLVGYLISGDPTYITNYNGARALIRKLERDEILEEVLKAYLSIK.

This sequence belongs to the UPF0297 family.

This Clostridium novyi (strain NT) protein is UPF0297 protein NT01CX_2279.